Consider the following 151-residue polypeptide: UPF0178 protein mma_0312 (151 aa).

The protein belongs to the UPF0178 family.

The protein is UPF0178 protein mma_0312 of Janthinobacterium sp. (strain Marseille) (Minibacterium massiliensis).